The primary structure comprises 264 residues: Splicing factor U2af 38 kDa subunit (264 aa).

The C3H1-type 1 zinc finger occupies 12-40 (EKDKVNCSFYFKIGACRHGDRCSRIHNKP). The residue at position 19 (S19) is a Phosphoserine. The RRM domain occupies 44–149 (QTVLLQNLYV…RPVYSELSPV (106 aa)). The segment at 151 to 178 (DFREACCRQYEMGECTRSGFCNFMHLKP) adopts a C3H1-type 2 zinc-finger fold. The span at 190 to 219 (RRRRARSRSRSPGRRRGSRSRSRSPGRRGG) shows a compositional bias: basic residues. Residues 190-264 (RRRRARSRSR…GGGGGGGGRY (75 aa)) form a disordered region. The span at 233–251 (NERDNMRGNDRGNDRDRRK) shows a compositional bias: basic and acidic residues. Residues 253–264 (GGGGGGGGGGRY) are compositionally biased toward gly residues.

The protein belongs to the splicing factor SR family. As to quaternary structure, associates with a 65 kDa protein.

The protein localises to the nucleus. In terms of biological role, necessary for the splicing of pre-mRNA. Binds to the polypyrimidine tract of introns early during spliceosome assembly. This Drosophila melanogaster (Fruit fly) protein is Splicing factor U2af 38 kDa subunit (U2af38).